The primary structure comprises 401 residues: Adaptive-response sensory kinase SasA (401 aa).

Positions 175-400 constitute a Histidine kinase domain; the sequence is MLVHDLRNPL…WFHFTLPVYP (226 aa). The residue at position 178 (His178) is a Phosphohistidine; by autocatalysis.

In terms of assembly, homooligomerizes. Interacts with KaiC. Participates in the KaiABC clock complex, whose core is composed of a KaiC homohexamer, 6 KaiB and up to 6 KaiA dimers. SasA and KaiB(fs) compete to bind to KaiC.

It catalyses the reaction ATP + protein L-histidine = ADP + protein N-phospho-L-histidine.. Its function is as follows. Member of the two-component regulatory system SasA/RpaA involved in genome-wide circadian gene expression. One of several clock output pathways. Participates in the Kai clock protein complex, the main circadian regulator in cyanobacteria, via its interaction with KaiC. KaiC enhances the autophosphorylation activity of SasA, which then transfers its phosphate group to RpaA to activate it. In addition to its output function, recruits fold-shifted KaiB (KaiB(fs)) to KaiC to cooperatively form the KaiB(6):KaiC(6) complex (independent of SasA kinase activity). Required for robustness of the circadian rhythm of gene expression and is involved in clock output, also required for adaptation to light/dark cycles. This is Adaptive-response sensory kinase SasA from Trichormus variabilis (strain ATCC 29413 / PCC 7937) (Anabaena variabilis).